A 696-amino-acid polypeptide reads, in one-letter code: L-amino-acid oxidase (696 aa).

Positions 1-130 (MKWSAAAGAA…IKMRRDLKAR (130 aa)) are excised as a propeptide. FAD contacts are provided by residues E207, R215, 236-237 (MR), and V440. R237 lines the substrate pocket. Y564 contacts substrate. FAD contacts are provided by residues E649 and 658–661 (IASA).

The protein belongs to the flavin monoamine oxidase family. FAD is required as a cofactor.

The enzyme catalyses an L-alpha-amino acid + O2 + H2O = a 2-oxocarboxylate + H2O2 + NH4(+). The protein is L-amino-acid oxidase (lox) of Neurospora crassa (strain ATCC 24698 / 74-OR23-1A / CBS 708.71 / DSM 1257 / FGSC 987).